The primary structure comprises 202 residues: Probable nicotinate-nucleotide adenylyltransferase (202 aa).

Belongs to the NadD family.

The enzyme catalyses nicotinate beta-D-ribonucleotide + ATP + H(+) = deamido-NAD(+) + diphosphate. It participates in cofactor biosynthesis; NAD(+) biosynthesis; deamido-NAD(+) from nicotinate D-ribonucleotide: step 1/1. In terms of biological role, catalyzes the reversible adenylation of nicotinate mononucleotide (NaMN) to nicotinic acid adenine dinucleotide (NaAD). The sequence is that of Probable nicotinate-nucleotide adenylyltransferase from Synechococcus sp. (strain JA-2-3B'a(2-13)) (Cyanobacteria bacterium Yellowstone B-Prime).